The following is a 224-amino-acid chain: Pleckstrin homology domain-containing family B member 2 (224 aa).

In terms of domain architecture, PH spans 2–109 (AFVKSGWLLR…WKIALQDART (108 aa)). Lys-20 contributes to the a 1,2-diacyl-sn-glycero-3-phospho-L-serine binding site.

The protein resides in the recycling endosome membrane. Functionally, involved in retrograde transport of recycling endosomes. The chain is Pleckstrin homology domain-containing family B member 2 (PLEKHB2) from Gallus gallus (Chicken).